A 241-amino-acid chain; its full sequence is Phosphoadenosine 5'-phosphosulfate reductase (241 aa).

The Nucleophile; cysteine thiosulfonate intermediate role is filled by Cys-235.

This sequence belongs to the PAPS reductase family. CysH subfamily.

The protein localises to the cytoplasm. It catalyses the reaction [thioredoxin]-disulfide + sulfite + adenosine 3',5'-bisphosphate + 2 H(+) = [thioredoxin]-dithiol + 3'-phosphoadenylyl sulfate. It functions in the pathway sulfur metabolism; hydrogen sulfide biosynthesis; sulfite from sulfate: step 3/3. Catalyzes the formation of sulfite from phosphoadenosine 5'-phosphosulfate (PAPS) using thioredoxin as an electron donor. This chain is Phosphoadenosine 5'-phosphosulfate reductase, found in Xanthomonas oryzae pv. oryzae (strain MAFF 311018).